Reading from the N-terminus, the 54-residue chain is UPF0391 membrane protein Bpet1858 (54 aa).

2 helical membrane passes run 5-25 (AVVFFVIAIIAAVLGFGGIAA) and 27-47 (AAGIAKILFFVFLILALLSIL).

This sequence belongs to the UPF0391 family.

It is found in the cell membrane. The protein is UPF0391 membrane protein Bpet1858 of Bordetella petrii (strain ATCC BAA-461 / DSM 12804 / CCUG 43448).